The chain runs to 244 residues: Type III pantothenate kinase (244 aa).

ATP is bound at residue 12-19 (VVGNTHVR). Substrate-binding positions include Tyr-79 and 83–86 (GLDR). Catalysis depends on Asp-85, which acts as the Proton acceptor. Asp-105 serves as a coordination point for K(+). Residue Thr-108 participates in ATP binding. Thr-163 lines the substrate pocket.

Belongs to the type III pantothenate kinase family. As to quaternary structure, homodimer. The cofactor is NH4(+). K(+) serves as cofactor.

The protein resides in the cytoplasm. The catalysed reaction is (R)-pantothenate + ATP = (R)-4'-phosphopantothenate + ADP + H(+). The protein operates within cofactor biosynthesis; coenzyme A biosynthesis; CoA from (R)-pantothenate: step 1/5. In terms of biological role, catalyzes the phosphorylation of pantothenate (Pan), the first step in CoA biosynthesis. The sequence is that of Type III pantothenate kinase from Synechococcus sp. (strain JA-3-3Ab) (Cyanobacteria bacterium Yellowstone A-Prime).